We begin with the raw amino-acid sequence, 1434 residues long: DNA-directed RNA polymerase subunit beta' (1434 aa).

Zn(2+) contacts are provided by cysteine 70, cysteine 72, cysteine 85, and cysteine 88. The Mg(2+) site is built by aspartate 460, aspartate 462, and aspartate 464. The Zn(2+) site is built by cysteine 840, cysteine 915, cysteine 922, and cysteine 925.

The protein belongs to the RNA polymerase beta' chain family. The RNAP catalytic core consists of 2 alpha, 1 beta, 1 beta' and 1 omega subunit. When a sigma factor is associated with the core the holoenzyme is formed, which can initiate transcription. Mg(2+) serves as cofactor. It depends on Zn(2+) as a cofactor.

The enzyme catalyses RNA(n) + a ribonucleoside 5'-triphosphate = RNA(n+1) + diphosphate. DNA-dependent RNA polymerase catalyzes the transcription of DNA into RNA using the four ribonucleoside triphosphates as substrates. The protein is DNA-directed RNA polymerase subunit beta' of Aeromonas hydrophila subsp. hydrophila (strain ATCC 7966 / DSM 30187 / BCRC 13018 / CCUG 14551 / JCM 1027 / KCTC 2358 / NCIMB 9240 / NCTC 8049).